The primary structure comprises 93 residues: Pyrimidine/purine nucleoside phosphorylase (93 aa).

Belongs to the nucleoside phosphorylase PpnP family.

It carries out the reaction a purine D-ribonucleoside + phosphate = a purine nucleobase + alpha-D-ribose 1-phosphate. The catalysed reaction is adenosine + phosphate = alpha-D-ribose 1-phosphate + adenine. It catalyses the reaction cytidine + phosphate = cytosine + alpha-D-ribose 1-phosphate. The enzyme catalyses guanosine + phosphate = alpha-D-ribose 1-phosphate + guanine. It carries out the reaction inosine + phosphate = alpha-D-ribose 1-phosphate + hypoxanthine. The catalysed reaction is thymidine + phosphate = 2-deoxy-alpha-D-ribose 1-phosphate + thymine. It catalyses the reaction uridine + phosphate = alpha-D-ribose 1-phosphate + uracil. The enzyme catalyses xanthosine + phosphate = alpha-D-ribose 1-phosphate + xanthine. In terms of biological role, catalyzes the phosphorolysis of diverse nucleosides, yielding D-ribose 1-phosphate and the respective free bases. Can use uridine, adenosine, guanosine, cytidine, thymidine, inosine and xanthosine as substrates. Also catalyzes the reverse reactions. The chain is Pyrimidine/purine nucleoside phosphorylase from Pseudomonas paraeruginosa (strain DSM 24068 / PA7) (Pseudomonas aeruginosa (strain PA7)).